A 267-amino-acid chain; its full sequence is Phosphate import ATP-binding protein PstB 2 (267 aa).

The 242-residue stretch at 21–262 folds into the ABC transporter domain; sequence LSTKDLHVYY…AKLQSTSDYV (242 aa). 53–60 provides a ligand contact to ATP; that stretch reads GPSGCGKS.

It belongs to the ABC transporter superfamily. Phosphate importer (TC 3.A.1.7) family. In terms of assembly, the complex is composed of two ATP-binding proteins (PstB), two transmembrane proteins (PstC and PstA) and a solute-binding protein (PstS).

It is found in the cell membrane. The enzyme catalyses phosphate(out) + ATP + H2O = ADP + 2 phosphate(in) + H(+). Its function is as follows. Part of the ABC transporter complex PstSACB involved in phosphate import. Responsible for energy coupling to the transport system. This chain is Phosphate import ATP-binding protein PstB 2, found in Streptococcus mutans serotype c (strain ATCC 700610 / UA159).